Reading from the N-terminus, the 722-residue chain is MQWGTPSQKDKKVNPVIKKFQYGNDTVTLETGRIARQASGAVLASMGQTSVLVAVTGSKEAKPGQDFFPLSVHYQEKAYAAGKIPGGFFKREARPSEKETLTSRLIDRPIRPLFPNGFLNEVQVVCTVISAEKDVDPDIVAMIGTSAALAISGIPFNGPIGAARVGYTQESGYLLNPTYSTLKTSELDMVVAGTADAVLMVESEAKELPEDIMLGAVLYAHQEMQAVVQAVAELAKDAAKPVWDWKPEEVNAELKAKVEHGFADSVGVAYRITDKQKRYDRLSELRNQAVAELATEESGVSADEVKGLFAKIEKQIVRSRVVAGEPRIDGRDSKTVRPLHVEVGVLPKVHGSALFTRGETQALVVSTLGSARDAQIIDALEGERKDPFMLHYNFPPYSVGECGRMGATGRREIGHGRLARRGIGAVLPKEEDFPYTMRVVSEITESNGSSSMASVCGASLALMDAGVPLKAPVAGIAMGLVKEDNGFAVLTDILGDEDHLGDMDFKVAGTADGVTALQMDIKIEGITEEIMEIALGQAMDARLHILAEMNRVIASPRKELSENAPQFHTMKIDPDKIRDIIGKGGATIRSITEETGASIDIDDNGTIKIYADDGDGMQAAIARIEEITAEAEIGAVYQGKVVRIVDFGAFVNFLPGKDGLVHISQIAHERVQNVSDYLKEGQDIEVKCMDIDQRGRIKLSIKELLPAPEAETAEAPAGEGEE.

The Mg(2+) site is built by Asp-498 and Asp-504. The KH domain occupies 565–624; that stretch reads PQFHTMKIDPDKIRDIIGKGGATIRSITEETGASIDIDDNGTIKIYADDGDGMQAAIARI. One can recognise an S1 motif domain in the interval 634–702; sequence GAVYQGKVVR…QRGRIKLSIK (69 aa).

This sequence belongs to the polyribonucleotide nucleotidyltransferase family. In terms of assembly, component of the RNA degradosome, which is a multiprotein complex involved in RNA processing and mRNA degradation. It depends on Mg(2+) as a cofactor.

It localises to the cytoplasm. The catalysed reaction is RNA(n+1) + phosphate = RNA(n) + a ribonucleoside 5'-diphosphate. Its function is as follows. Involved in mRNA degradation. Catalyzes the phosphorolysis of single-stranded polyribonucleotides processively in the 3'- to 5'-direction. The polypeptide is Polyribonucleotide nucleotidyltransferase (Saccharophagus degradans (strain 2-40 / ATCC 43961 / DSM 17024)).